Consider the following 505-residue polypeptide: Trans-cinnamate 4-monooxygenase (505 aa).

Residues 3–23 (LLLLEKTLLALFIAATIAITI) form a helical membrane-spanning segment. (E)-cinnamate-binding positions include 212–217 (RSRLAQ) and A305. C446 contributes to the heme binding site.

It belongs to the cytochrome P450 family. It depends on heme as a cofactor.

Its subcellular location is the membrane. The enzyme catalyses (E)-cinnamate + reduced [NADPH--hemoprotein reductase] + O2 = (E)-4-coumarate + oxidized [NADPH--hemoprotein reductase] + H2O + H(+). It participates in phenylpropanoid metabolism; trans-4-coumarate biosynthesis; trans-4-coumarate from trans-cinnamate: step 1/1. Its function is as follows. Catalyzes the first oxidative step of the phenylpropanoid pathway in higher plants by transforming trans-cinnamate into p-coumarate. The compounds formed by this pathway are essential components for lignification, pollination, and defense against ultraviolet light, predators and pathogens. The sequence is that of Trans-cinnamate 4-monooxygenase (CYP73A19) from Cicer arietinum (Chickpea).